Consider the following 243-residue polypeptide: E3 ubiquitin-protein ligase RMA3 (243 aa).

The RING-type zinc finger occupies 44-92; sequence CNICLDTAHDPVVTLCGHLFCWPCIYKWLHVQLSSVSVDQHQNNCPVCK. A disordered region spans residues 110–135; sequence SPSSTFGSKKQDALSTDIPRRPAPSA. The helical; Anchor for type IV membrane protein transmembrane segment at 223 to 243 threads the bilayer; the sequence is KSLNRVSIFFLCCIILCLLLF.

In terms of tissue distribution, ubiquitous. Highly expressed in roots.

It localises to the endoplasmic reticulum membrane. The catalysed reaction is S-ubiquitinyl-[E2 ubiquitin-conjugating enzyme]-L-cysteine + [acceptor protein]-L-lysine = [E2 ubiquitin-conjugating enzyme]-L-cysteine + N(6)-ubiquitinyl-[acceptor protein]-L-lysine.. It participates in protein modification; protein ubiquitination. In terms of biological role, E3 ubiquitin-protein ligase. The chain is E3 ubiquitin-protein ligase RMA3 (RMA3) from Arabidopsis thaliana (Mouse-ear cress).